Consider the following 255-residue polypeptide: 1-(5-phosphoribosyl)-5-[(5-phosphoribosylamino)methylideneamino] imidazole-4-carboxamide isomerase (255 aa).

D12 serves as the catalytic Proton acceptor. The active-site Proton donor is the D131.

This sequence belongs to the HisA/HisF family.

Its subcellular location is the cytoplasm. The catalysed reaction is 1-(5-phospho-beta-D-ribosyl)-5-[(5-phospho-beta-D-ribosylamino)methylideneamino]imidazole-4-carboxamide = 5-[(5-phospho-1-deoxy-D-ribulos-1-ylimino)methylamino]-1-(5-phospho-beta-D-ribosyl)imidazole-4-carboxamide. The protein operates within amino-acid biosynthesis; L-histidine biosynthesis; L-histidine from 5-phospho-alpha-D-ribose 1-diphosphate: step 4/9. In Cutibacterium acnes (strain DSM 16379 / KPA171202) (Propionibacterium acnes), this protein is 1-(5-phosphoribosyl)-5-[(5-phosphoribosylamino)methylideneamino] imidazole-4-carboxamide isomerase.